A 259-amino-acid polypeptide reads, in one-letter code: MVASSPETLISAAQKCLCSRKKRLSPSSCLEVTIHIIAVDLGVKPALLYDSNGASPDQLQLYLHSLQESSVVSNSLRIMSINDNTFIINPDIMKSHLGELLKSKSLPLIDVCSSRKRPVLCAFERSAEEMVRSFLEVFMNGLDLVVLEEELYKDWNLCTFFGILLGYPASYWFEQTQGFENCLSMTPLVVCTVWVRWQIHEIKQRCCLYSFSVPEELWSDVQSHIQRWTDHLRERFSKQTVLTDICFSRDTVTLPSVTL.

This sequence belongs to the UPF0739 family.

This chain is UPF0739 protein C1orf74 homolog, found in Danio rerio (Zebrafish).